A 258-amino-acid polypeptide reads, in one-letter code: UPF0246 protein YaaA (258 aa).

This sequence belongs to the UPF0246 family.

This Escherichia coli O8 (strain IAI1) protein is UPF0246 protein YaaA.